We begin with the raw amino-acid sequence, 2957 residues long: Toxin PAU_02230 (2957 aa).

Residues 949–968 (TSVSPAETAQSTPEPLSDFA) are disordered. A membrane localization domain that interacts with the inner leaflet of the plasma membrane region spans residues 2115-2144 (EWFKHSETGLKGGGPIDDIRKYIARKSAIK). A tyrosine glycosyltransferase PaToxG region spans residues 2115-2449 (EWFKHSETGL…TSTIVTPLAP (335 aa)). UDP-N-acetyl-alpha-D-glucosamine contacts are provided by residues 2169-2171 (IWI) and 2259-2260 (SD). Residues Asp2276 and Asp2278 each contribute to the a divalent metal cation site. The short motif at 2276–2279 (DIDD) is the DxDD motif element. Asn2312 is a binding site for UDP-N-acetyl-alpha-D-glucosamine. Residues 2450 to 2672 (KTEMLPPVPS…NYSVNPTAEN (223 aa)) are sseI-like deamidase PaToxD. Residues Cys2509, His2547, and Asp2562 each act as for deamidase activity in the active site. The segment at 2667 to 2705 (NPTAENLSPPPPPPIPSHGQVPKTVTPPPPPMRSPLSLS) is disordered.

The cofactor is a divalent metal cation.

Its subcellular location is the secreted. The protein localises to the host cell membrane. It carries out the reaction L-tyrosyl-[protein] + UDP-N-acetyl-alpha-D-glucosamine = O-(N-acetyl-alpha-D-glucosaminyl)-L-tyrosyl-[protein] + UDP + H(+). The enzyme catalyses L-glutaminyl-[protein] + H2O = L-glutamyl-[protein] + NH4(+). Toxin that acts on host cells by modifying Rho proteins by tyrosine GlcNAcylation and heterotrimeric G alpha proteins by deamidation. Catalyzes the mono-O-GlcNAcylation of small GTPases of the Rho family (RhoA, RhoB, RhoC, Rac1, Rac2, Rac3, Cdc42) in eukaryotic host cells at the conserved tyrosine residue located in the switch I region (Tyr-32/34), using UDP-N-acetylglucosamine (UDP-GlcNAc) as the sugar donor; other GTPases of the Rho, Ras or Rab families are not substrates. Tyrosine glycosylation inhibits Rho activation and prevents interaction with downstream effectors, resulting in actin disassembly, inhibition of phagocytosis, cell rounding, and toxicity toward insects and mammalian cells. Also catalyzes the deamidation of the catalytic glutamine in heterotrimeric G alpha proteins (Gi, Gq/11), which blocks GTP hydrolysis and arrests the G proteins in a permanent active state leading to activation of Rho GTPases. Thus, PaTox hijacks host GTPase signaling in a bidirectional manner by deamidation-induced activation and glycosylation-induced inactivation of GTPases. This chain is Toxin PAU_02230, found in Photorhabdus asymbiotica subsp. asymbiotica (strain ATCC 43949 / 3105-77) (Xenorhabdus luminescens (strain 2)).